We begin with the raw amino-acid sequence, 174 residues long: uncharacterized protein (174 aa).

A helical membrane pass occupies residues 7–24; it reads LLLLAFAVCLAVGFSGCL.

It localises to the membrane. This is an uncharacterized protein from Methanocaldococcus jannaschii (strain ATCC 43067 / DSM 2661 / JAL-1 / JCM 10045 / NBRC 100440) (Methanococcus jannaschii).